The primary structure comprises 323 residues: Glyoxylate/hydroxypyruvate reductase B (323 aa).

Catalysis depends on residues arginine 237 and glutamate 266. Residue histidine 285 is the Proton donor of the active site.

The protein belongs to the D-isomer specific 2-hydroxyacid dehydrogenase family. GhrB subfamily. In terms of assembly, homodimer.

Its subcellular location is the cytoplasm. The enzyme catalyses glycolate + NADP(+) = glyoxylate + NADPH + H(+). It carries out the reaction (R)-glycerate + NAD(+) = 3-hydroxypyruvate + NADH + H(+). It catalyses the reaction (R)-glycerate + NADP(+) = 3-hydroxypyruvate + NADPH + H(+). Catalyzes the NADPH-dependent reduction of glyoxylate and hydroxypyruvate into glycolate and glycerate, respectively. The protein is Glyoxylate/hydroxypyruvate reductase B of Klebsiella pneumoniae subsp. pneumoniae (strain ATCC 700721 / MGH 78578).